Here is a 370-residue protein sequence, read N- to C-terminus: D-aspartate oxidase (370 aa).

FAD-binding residues include isoleucine 15, alanine 49, serine 50, glycine 54, valine 166, arginine 317, glycine 346, and glutamine 348. Residues 368–370 carry the Microbody targeting signal motif; the sequence is ARL.

It belongs to the DAMOX/DASOX family. In terms of assembly, homotetramer. It depends on FAD as a cofactor.

The protein resides in the peroxisome matrix. It catalyses the reaction D-aspartate + O2 + H2O = oxaloacetate + H2O2 + NH4(+). The catalysed reaction is D-glutamate + O2 + H2O = H2O2 + 2-oxoglutarate + NH4(+). Inhibited by malonate and D-malate. Very mildly inhibited by benzoate, ethylenediaminetetraacetic acid (EDTA), crotonate and anthranilate. May be very mildly inhibited by meso-tartrate. Selectively catalyzes the oxidative deamination of acidic amino acids. Protects the organism from the toxicity of D-amino acids. Enables the organism to utilize D-amino acids as a source of nutrients. Enables the organism to utilize D-aspartate as a source of nitrogen and carbon. This is D-aspartate oxidase from Vanrija humicola (Yeast).